We begin with the raw amino-acid sequence, 215 residues long: Large ribosomal subunit protein bL25 (215 aa).

The span at 192–203 shows a compositional bias: acidic residues; sequence EEATEEEEEAAE. The disordered stretch occupies residues 192–215; the sequence is EEATEEEEEAAEPEVIKRKEEEEE. The span at 205–215 shows a compositional bias: basic and acidic residues; sequence EVIKRKEEEEE.

It belongs to the bacterial ribosomal protein bL25 family. CTC subfamily. As to quaternary structure, part of the 50S ribosomal subunit; part of the 5S rRNA/L5/L18/L25 subcomplex. Contacts the 5S rRNA. Binds to the 5S rRNA independently of L5 and L18.

In terms of biological role, this is one of the proteins that binds to the 5S RNA in the ribosome where it forms part of the central protuberance. This is Large ribosomal subunit protein bL25 from Thermotoga maritima (strain ATCC 43589 / DSM 3109 / JCM 10099 / NBRC 100826 / MSB8).